Consider the following 370-residue polypeptide: MQTAARRSFDYDMPLIQTPTSACQIRQAWAKVADTPDRETAGRLKDEIKALLKEKNAVLVAHYYVDPLIQDLALETGGCVGDSLEMARFGAEHEADTLVVAGVRFMGESAKILCPEKTVLMPDLEAECSLDLGCPEEAFSAFCDQHPDRTVVVYANTSAAVKARADWVVTSSVALEIVSYLKSRGEKLIWGPDRHLGDYICRETGADMLLWQGSCIVHNEFKGQELAALKAEHPDAVVLVHPESPQSVIELGDVVGSTSKLLKAAVSRPEKKFIVATDLGILHEMQKQAPDKEFIAAPTAGNGGSCKSCAFCPWMAMNSLGGIKYALTSGRNEILLDRKLGEAAKLPLQRMLDFAAGLKRGDVFNGMGPA.

Iminosuccinate-binding residues include His62 and Ser83. Residue Cys128 coordinates [4Fe-4S] cluster. Residues 154 to 156 (YAN) and Ser171 each bind iminosuccinate. Cys215 serves as a coordination point for [4Fe-4S] cluster. Iminosuccinate is bound by residues 241-243 (HPE) and Thr258. Residue Cys312 coordinates [4Fe-4S] cluster.

This sequence belongs to the quinolinate synthase family. Type 1 subfamily. [4Fe-4S] cluster is required as a cofactor.

It localises to the cytoplasm. It carries out the reaction iminosuccinate + dihydroxyacetone phosphate = quinolinate + phosphate + 2 H2O + H(+). It functions in the pathway cofactor biosynthesis; NAD(+) biosynthesis; quinolinate from iminoaspartate: step 1/1. Its function is as follows. Catalyzes the condensation of iminoaspartate with dihydroxyacetone phosphate to form quinolinate. The polypeptide is Quinolinate synthase (Neisseria meningitidis serogroup C / serotype 2a (strain ATCC 700532 / DSM 15464 / FAM18)).